The chain runs to 468 residues: Protein wingless (468 aa).

An N-terminal signal peptide occupies residues 1 to 17 (MDISYIFVICLMALCSG). Residues 83–106 (VKGANLAISECQHQFRNRRWNCST) form a binds porcupine region. A disulfide bond links Cys93 and Cys104. Asn103 and Asn108 each carry an N-linked (GlcNAc...) asparagine glycan. Disulfide bonds link Cys146–Cys154, Cys156–Cys185, Cys233–Cys247, and Cys235–Cys242. Ser239 carries the O-palmitoleoyl serine; by PORCN lipid modification. The tract at residues 333–362 (ISKIHHPNMPSPNSLPQAGQRGGRNGRRQG) is disordered. Intrachain disulfides connect Cys397/Cys428, Cys413/Cys423, Cys427/Cys467, Cys443/Cys458, Cys445/Cys455, and Cys450/Cys451. An N-linked (GlcNAc...) asparagine glycan is attached at Asn414.

It belongs to the Wnt family. As to quaternary structure, monomer; folds by intramolecular disulfide bonds. Interacts with porcupine (por). Interacts with wls; in the Golgi. Interacts with en. Interacts with the proteoglycan Cow (heparan sulfate-bound form); this stabilizes wg and promotes its extracellular distribution. Interacts with peg; the interaction facilitates short-range diffusion of wg. Palmitoleoylated by porcupine. The lipid group functions as a sorting signal, targeting the ligand to polarized vesicles that transport wg to unique sites at the cell surface. Depalmitoleoylated by notum, leading to inhibit Wnt signaling pathway. Post-translationally, major form is glycosylated at 2 sites, glycosylation is stimulated by porcupine at the ER. As to expression, segmented expression in embryos. In embryonic tracheal cells, expression is in stripes flanking the tracheal placode.

It localises to the secreted. Its subcellular location is the synapse. It is found in the membrane. The protein resides in the extracellular space. The protein localises to the extracellular matrix. Its function is as follows. Binds as a ligand to a family of frizzled seven-transmembrane receptors and acts through a cascade of genes on the nucleus. Segment polarity protein. May be a growth factor. Acts on neighboring cells to regulate at least one gene, the homeobox segmentation gene engrailed. Wg signal represses arm phosphorylation. Wg signaling operates by inactivating the sgg repression of engrailed autoactivation. Wg and Wnt2 have a role in the developing trachea and together are responsible for all dorsal trunk formation. Wg also acts in the developing epidermis. Acts as a morphogen, and diffuses long distances despite its lipidation. Lipophorin is required for diffusion, probably by acting as vehicle for its movement, explaining how it can spread over long distances despite its lipidation. In non-neuronal cells, wls directs wg secretion via clathrin-mediated endocytosis and the retromer complex (a conserved protein complex consisting of Vps26 and Vps35) to sustain a wls traffic loop encompassing the Golgi, the cell surface, an endocytic compartment and a retrograde route leading back to the Golgi. In neuronal cells (the larval motorneuron NMJ), wg signal moves across the synapse through the release of wls-containing exosome-like vesicles. In Drosophila melanogaster (Fruit fly), this protein is Protein wingless (wg).